We begin with the raw amino-acid sequence, 435 residues long: Serine--tRNA ligase (435 aa).

234–236 (TAE) serves as a coordination point for L-serine. Residue 265–267 (RRE) coordinates ATP. Glutamate 288 is an L-serine binding site. Residue 352-355 (EISS) coordinates ATP. L-serine is bound at residue serine 388.

The protein belongs to the class-II aminoacyl-tRNA synthetase family. Type-1 seryl-tRNA synthetase subfamily. In terms of assembly, homodimer. The tRNA molecule binds across the dimer.

Its subcellular location is the cytoplasm. It carries out the reaction tRNA(Ser) + L-serine + ATP = L-seryl-tRNA(Ser) + AMP + diphosphate + H(+). The enzyme catalyses tRNA(Sec) + L-serine + ATP = L-seryl-tRNA(Sec) + AMP + diphosphate + H(+). The protein operates within aminoacyl-tRNA biosynthesis; selenocysteinyl-tRNA(Sec) biosynthesis; L-seryl-tRNA(Sec) from L-serine and tRNA(Sec): step 1/1. In terms of biological role, catalyzes the attachment of serine to tRNA(Ser). Is also able to aminoacylate tRNA(Sec) with serine, to form the misacylated tRNA L-seryl-tRNA(Sec), which will be further converted into selenocysteinyl-tRNA(Sec). The chain is Serine--tRNA ligase from Synechococcus sp. (strain JA-3-3Ab) (Cyanobacteria bacterium Yellowstone A-Prime).